Reading from the N-terminus, the 379-residue chain is tRNA-specific 2-thiouridylase MnmA (379 aa).

Residues 16–23 (GLSGGVDS) and Met42 contribute to the ATP site. Positions 102 to 104 (NPD) are interaction with target base in tRNA. The active-site Nucleophile is the Cys107. A disulfide bridge links Cys107 with Cys204. ATP is bound at residue Gly131. Residues 154-156 (KDQ) are interaction with tRNA. Cys204 serves as the catalytic Cysteine persulfide intermediate. The tract at residues 316-317 (RY) is interaction with tRNA.

It belongs to the MnmA/TRMU family.

Its subcellular location is the cytoplasm. It carries out the reaction S-sulfanyl-L-cysteinyl-[protein] + uridine(34) in tRNA + AH2 + ATP = 2-thiouridine(34) in tRNA + L-cysteinyl-[protein] + A + AMP + diphosphate + H(+). In terms of biological role, catalyzes the 2-thiolation of uridine at the wobble position (U34) of tRNA, leading to the formation of s(2)U34. In Hydrogenovibrio crunogenus (strain DSM 25203 / XCL-2) (Thiomicrospira crunogena), this protein is tRNA-specific 2-thiouridylase MnmA.